The following is a 147-amino-acid chain: 3-dehydroquinate dehydratase (147 aa).

Tyr23 (proton acceptor) is an active-site residue. Positions 74, 80, and 87 each coordinate substrate. The active-site Proton donor is His100. Substrate is bound by residues 101–102 (LS) and Arg111.

This sequence belongs to the type-II 3-dehydroquinase family. As to quaternary structure, homododecamer.

It carries out the reaction 3-dehydroquinate = 3-dehydroshikimate + H2O. It functions in the pathway metabolic intermediate biosynthesis; chorismate biosynthesis; chorismate from D-erythrose 4-phosphate and phosphoenolpyruvate: step 3/7. Functionally, catalyzes a trans-dehydration via an enolate intermediate. The sequence is that of 3-dehydroquinate dehydratase from Clostridium botulinum (strain ATCC 19397 / Type A).